We begin with the raw amino-acid sequence, 123 residues long: Small ribosomal subunit protein uS12 (123 aa).

The segment at 1-24 is disordered; that stretch reads MPTINQLIRKERKKQVKKSKSPAL. Residues 10–20 show a composition bias toward basic residues; the sequence is KERKKQVKKSK. A 3-methylthioaspartic acid modification is found at Asp-89.

This sequence belongs to the universal ribosomal protein uS12 family. Part of the 30S ribosomal subunit. Contacts proteins S8 and S17. May interact with IF1 in the 30S initiation complex.

Its function is as follows. With S4 and S5 plays an important role in translational accuracy. Functionally, interacts with and stabilizes bases of the 16S rRNA that are involved in tRNA selection in the A site and with the mRNA backbone. Located at the interface of the 30S and 50S subunits, it traverses the body of the 30S subunit contacting proteins on the other side and probably holding the rRNA structure together. The combined cluster of proteins S8, S12 and S17 appears to hold together the shoulder and platform of the 30S subunit. The sequence is that of Small ribosomal subunit protein uS12 from Sulfurovum sp. (strain NBC37-1).